The chain runs to 252 residues: Small ribosomal subunit protein uS2 (252 aa).

Ser2 carries the post-translational modification N-acetylserine. Positions 213 to 222 (QVAEETAGAA) are enriched in low complexity. The disordered stretch occupies residues 213-252 (QVAEETAGAATEEEEAKEEVTEEQTEATEWAEETTEAVAW). A compositionally biased stretch (acidic residues) spans 223–252 (TEEEEAKEEVTEEQTEATEWAEETTEAVAW).

The protein belongs to the universal ribosomal protein uS2 family. As to quaternary structure, component of the small ribosomal subunit. Mature ribosomes consist of a small (40S) and a large (60S) subunit. The 40S subunit contains about 33 different proteins and 1 molecule of RNA (18S). The 60S subunit contains about 49 different proteins and 3 molecules of RNA (25S, 5.8S and 5S). Interacts with RPS21.

It localises to the cytoplasm. Functionally, required for the assembly and/or stability of the 40S ribosomal subunit. Required for the processing of the 20S rRNA-precursor to mature 18S rRNA in a late step of the maturation of 40S ribosomal subunits. The polypeptide is Small ribosomal subunit protein uS2 (Zygosaccharomyces rouxii (strain ATCC 2623 / CBS 732 / NBRC 1130 / NCYC 568 / NRRL Y-229)).